The primary structure comprises 98 residues: Small ribosomal subunit protein uS17 (98 aa).

It belongs to the universal ribosomal protein uS17 family. Part of the 30S ribosomal subunit.

Its function is as follows. One of the primary rRNA binding proteins, it binds specifically to the 5'-end of 16S ribosomal RNA. In Carboxydothermus hydrogenoformans (strain ATCC BAA-161 / DSM 6008 / Z-2901), this protein is Small ribosomal subunit protein uS17.